The primary structure comprises 714 residues: Forkhead box protein P2 (714 aa).

Positions 1–28 (MMQESATETISNSSMNQNGMSTLSSQLD) are enriched in polar residues. Disordered stretches follow at residues 1–45 (MMQE…SEVS) and 280–338 (DNGI…TGAS). A compositionally biased stretch (low complexity) spans 291-304 (TTNNSSSTTSSTTS). A compositionally biased stretch (polar residues) spans 314–323 (SIVNGQSSVL). Residues 325 to 336 (ARRDSSSHEETG) are compositionally biased toward basic and acidic residues. The segment at 345 to 370 (GVCKWPGCESICEDFGQFLKHLNNEH) adopts a C2H2-type zinc-finger fold. Positions 387-408 (VQQLEIQLSKERERLQAMMTHL) are leucine-zipper. The CTBP1-binding stretch occupies residues 421 to 425 (PLNLV). The segment covering 437–458 (TSPQSLPQTPTTPTAPVTPITQ) has biased composition (low complexity). A disordered region spans residues 437 to 464 (TSPQSLPQTPTTPTAPVTPITQGPSVIT). A DNA-binding region (fork-head) is located at residues 503–593 (RPPFTYATLI…SQKITGSPTL (91 aa)). Disordered regions lie at residues 648 to 667 (LDHIDSNGNSSPGCSPQPHI) and 677 to 714 (VIAEDEDCPMSLVTTANHSPELEDDREIEEEPLSEDLE). Acidic residues predominate over residues 698–714 (LEDDREIEEEPLSEDLE).

In terms of assembly, forms homodimers and heterodimers with FOXP1 and FOXP4. Dimerization is required for DNA-binding. Interacts with CTBP1. Interacts with FOXP1. Interacts with TBR1. Interacts with ZMYM2. In terms of tissue distribution, highest expression in lung. Lower expression in spleen, skeletal muscle, brain, kidney and small intestine.

It localises to the nucleus. Its function is as follows. Transcriptional repressor that may play a role in the specification and differentiation of lung epithelium. May also play a role in developing neural, gastrointestinal and cardiovascular tissues. Can act with CTBP1 to synergistically repress transcription but CTPBP1 is not essential. Plays a role in synapse formation by regulating SRPX2 levels. This Mus musculus (Mouse) protein is Forkhead box protein P2 (Foxp2).